The following is a 158-amino-acid chain: Phosphopantetheine adenylyltransferase (158 aa).

Residue Thr-10 participates in substrate binding. Residues 10 to 11 (TF) and His-18 contribute to the ATP site. Positions 42, 74, and 88 each coordinate substrate. Residues 89–91 (GLR), Glu-99, and 124–130 (YSFISSS) contribute to the ATP site.

It belongs to the bacterial CoaD family. Homohexamer. Mg(2+) serves as cofactor.

It localises to the cytoplasm. The catalysed reaction is (R)-4'-phosphopantetheine + ATP + H(+) = 3'-dephospho-CoA + diphosphate. It functions in the pathway cofactor biosynthesis; coenzyme A biosynthesis; CoA from (R)-pantothenate: step 4/5. Reversibly transfers an adenylyl group from ATP to 4'-phosphopantetheine, yielding dephospho-CoA (dPCoA) and pyrophosphate. This Erwinia tasmaniensis (strain DSM 17950 / CFBP 7177 / CIP 109463 / NCPPB 4357 / Et1/99) protein is Phosphopantetheine adenylyltransferase.